Consider the following 309-residue polypeptide: Coenzyme PQQ synthesis protein B (309 aa).

This sequence belongs to the PqqB family.

Its pathway is cofactor biosynthesis; pyrroloquinoline quinone biosynthesis. In terms of biological role, may be involved in the transport of PQQ or its precursor to the periplasm. This Bradyrhizobium diazoefficiens (strain JCM 10833 / BCRC 13528 / IAM 13628 / NBRC 14792 / USDA 110) protein is Coenzyme PQQ synthesis protein B.